A 457-amino-acid chain; its full sequence is Bifunctional protein GlmU (457 aa).

The segment at 1–228 (MEELVSVILA…SEEIIGVNSR (228 aa)) is pyrophosphorylase. UDP-N-acetyl-alpha-D-glucosamine contacts are provided by residues 9–12 (LAAG), K23, Q73, and 78–79 (GT). D102 provides a ligand contact to Mg(2+). 4 residues coordinate UDP-N-acetyl-alpha-D-glucosamine: G139, E154, N169, and N226. N226 serves as a coordination point for Mg(2+). The interval 229–249 (VQLSNAEKVMRRRINEKHMEN) is linker. The interval 250 to 457 (GVTIIDPDST…VEERIKKGRL (208 aa)) is N-acetyltransferase. R331 and K349 together coordinate UDP-N-acetyl-alpha-D-glucosamine. H361 functions as the Proton acceptor in the catalytic mechanism. UDP-N-acetyl-alpha-D-glucosamine is bound by residues Y364 and N375. Residues 384–385 (NY), A421, and R438 contribute to the acetyl-CoA site.

It in the N-terminal section; belongs to the N-acetylglucosamine-1-phosphate uridyltransferase family. This sequence in the C-terminal section; belongs to the transferase hexapeptide repeat family. As to quaternary structure, homotrimer. Requires Mg(2+) as cofactor.

The protein localises to the cytoplasm. The catalysed reaction is alpha-D-glucosamine 1-phosphate + acetyl-CoA = N-acetyl-alpha-D-glucosamine 1-phosphate + CoA + H(+). The enzyme catalyses N-acetyl-alpha-D-glucosamine 1-phosphate + UTP + H(+) = UDP-N-acetyl-alpha-D-glucosamine + diphosphate. The protein operates within nucleotide-sugar biosynthesis; UDP-N-acetyl-alpha-D-glucosamine biosynthesis; N-acetyl-alpha-D-glucosamine 1-phosphate from alpha-D-glucosamine 6-phosphate (route II): step 2/2. It participates in nucleotide-sugar biosynthesis; UDP-N-acetyl-alpha-D-glucosamine biosynthesis; UDP-N-acetyl-alpha-D-glucosamine from N-acetyl-alpha-D-glucosamine 1-phosphate: step 1/1. It functions in the pathway bacterial outer membrane biogenesis; LPS lipid A biosynthesis. Catalyzes the last two sequential reactions in the de novo biosynthetic pathway for UDP-N-acetylglucosamine (UDP-GlcNAc). The C-terminal domain catalyzes the transfer of acetyl group from acetyl coenzyme A to glucosamine-1-phosphate (GlcN-1-P) to produce N-acetylglucosamine-1-phosphate (GlcNAc-1-P), which is converted into UDP-GlcNAc by the transfer of uridine 5-monophosphate (from uridine 5-triphosphate), a reaction catalyzed by the N-terminal domain. The protein is Bifunctional protein GlmU of Caldanaerobacter subterraneus subsp. tengcongensis (strain DSM 15242 / JCM 11007 / NBRC 100824 / MB4) (Thermoanaerobacter tengcongensis).